The following is a 247-amino-acid chain: Mast cell protease 2 (247 aa).

The first 19 residues, 1–19 (MHLLALHLLLFLLGSRAKA), serve as a signal peptide directing secretion. The propeptide at 20 to 21 (GE) is activation peptide. Positions 22–245 (IIGGTECKPH…YRPWINKILR (224 aa)) constitute a Peptidase S1 domain. Cys-51 and Cys-67 form a disulfide bridge. The active-site Charge relay system is the His-66. The N-linked (GlcNAc...) asparagine glycan is linked to Asn-80. Catalysis depends on Asp-110, which acts as the Charge relay system. Intrachain disulfides connect Cys-144/Cys-209 and Cys-175/Cys-188. Catalysis depends on Ser-203, which acts as the Charge relay system.

This sequence belongs to the peptidase S1 family. Granzyme subfamily.

The chain is Mast cell protease 2 from Meriones unguiculatus (Mongolian jird).